Here is a 624-residue protein sequence, read N- to C-terminus: Aeromonas extracellular serine protease (624 aa).

The N-terminal stretch at 1–24 (MKQTSLALAITALLSTLPSALVQA) is a signal peptide. A disulfide bridge connects residues cysteine 28 and cysteine 48. Asparagine 53 is a Ca(2+) binding site. The Peptidase S8 domain maps to 59–421 (QWYLLNSGQD…GKVRDVKGLE (363 aa)). The Charge relay system role is filled by aspartate 102. A Ca(2+)-binding site is contributed by aspartate 111. Residues 116–140 (VRPGSKNVVTGSDDPTPTDPDTAHG) are disordered. Histidine 139 (charge relay system) is an active-site residue. 10 residues coordinate Ca(2+): valine 150, asparagine 152, isoleucine 154, threonine 156, aspartate 321, leucine 322, glycine 324, methionine 327, asparagine 330, and cysteine 350. A disulfide bridge connects residues cysteine 325 and cysteine 350. The active-site Charge relay system is the serine 360. In terms of domain architecture, P/Homo B spans 456–622 (LPPLVQLPWQ…SLRVLGHDAN (167 aa)). The Ca(2+) site is built by aspartate 478, aspartate 512, aspartate 577, alanine 579, asparagine 602, and asparagine 603.

Belongs to the peptidase S8 family. Furin subfamily. In terms of assembly, forms a complex with the chaperone ORF2 in the periplasm. After translocation of the ASP-ORF2 complex from the periplasm to the extracellular space, the complex is dissociated in a pH-dependent manner. Ca(2+) serves as cofactor.

The protein resides in the periplasm. The protein localises to the secreted. It carries out the reaction Cleavage of -Lys-Lys-|-Xaa and -Lys-Arg-|-Xaa bonds.. With respect to regulation, folding, maturation and production of the active form of the protease by the cell requires a protein (ORF2), encoded just downstream of asp, which acts as a chaperone. Formation of a complex with ORF2 in the periplasm also inactivates the protease activity and likely protects ASP from intrinsic proteases. In vitro, protease activity is inhibited by human alpha-2-macroglobulin, suggesting that this inhibitor can impede ASP virulence activities in A.sobria infection sites. However, slow ASP inhibition by alpha-2-macroglobulin in plasma may indicate insufficient ASP control in vivo. Activity is inhibited by serine protease inhibitors such as 4-(2-aminoethyl)-benzenesulfonyl fluoride (AEBSF) and diisopropyl fluorophosphate (DFP). Not inhibited by metallo-protease inhibitors and cysteine protease inhibitors. The treatment with reagents to modify sulfhydryl group do not reduce the activity. Exhibits serine protease activity. Preferentially cleaves the peptide bond following two basic residues, one of which is Lys, but does not recognize the bond following a single basic residue. Probable potent virulence factor that cleaves various host plasma proteins, including prekallikrein, prothrombin and fibrinogen. ASP induces vascular leakage and reduction in blood pressure by activating the host plasma kallikrein/kinin system. It affects the host coagulation system during infection through activation of prothrombin to alpha-thrombin and degradation of fibrinogen, which impairs plasma clottability. It also hydrolyzes the complement component C5, releasing the C5a anaphylatoxin, which causes the formation of pus and edema. In addition, degrades its external chaperone ORF2 after the secretion of the ASP-ORF2 complex. This is Aeromonas extracellular serine protease from Aeromonas sobria.